The sequence spans 146 residues: Snake venom vascular endothelial growth factor toxin TfsvVEGF (146 aa).

Residues 1-24 (MAAYLLAVAILFCIQGWPSGTVQG) form the signal peptide. Position 25 is a pyrrolidone carboxylic acid (Gln25). Intrachain disulfides connect Cys38–Cys80, Cys69–Cys115, and Cys73–Cys117. The segment covering 118-139 (RPRSPGDVNNGKDKRNPEEGGP) has biased composition (basic and acidic residues). Positions 118–146 (RPRSPGDVNNGKDKRNPEEGGPRARFPFV) are disordered.

Belongs to the PDGF/VEGF growth factor family. Snake venom VEGF subfamily. In terms of assembly, homodimer; disulfide-linked. Interacts with VEGF receptor-1 (FLT1) with a high affinity, whereas it binds to VEGF receptor-2 (KDR) with a low affinity. Does not bind VEGF receptor-3 (FLT4). As to expression, expressed by the venom gland.

The protein localises to the secreted. Its function is as follows. Snake venom VEGFs may contribute to venom dispersion and prey subjugation by inducing vascular permeability and hypotension. This protein strongly increases vascular permeability, and weakly stimulates angiogenesis. Interacts with VEGF receptor-1 (FLT1) with a high affinity, whereas it binds to VEGF receptor-2 (KDR) with a low affinity. Stimulates autophosphorylation of VEGF receptor-1 (VEGFR-1/FLT1), and VEGF receptor-2 (VEGFR-2/KDR). The sequence is that of Snake venom vascular endothelial growth factor toxin TfsvVEGF from Protobothrops flavoviridis (Habu).